A 187-amino-acid polypeptide reads, in one-letter code: uncharacterized protein (187 aa).

Residues 139 to 168 (ESKDRKALKNAARKAEKNAHEESSYFRVDD) show a composition bias toward basic and acidic residues. The interval 139 to 172 (ESKDRKALKNAARKAEKNAHEESSYFRVDDPEPE) is disordered.

This is an uncharacterized protein from Caenorhabditis elegans.